Consider the following 379-residue polypeptide: Type II methyltransferase M.SsoII (379 aa).

The 58-residue stretch at 9 to 66 (IKEKRERLHMTQKEFADALGLSKYGDRTIRRWERGETKPTGAELKAVIDFPDTPPYPN) folds into the HTH cro/C1-type domain. In terms of domain architecture, SAM-dependent MTase C5-type spans 72–379 (YRMIDLFAGI…AEKIISTLDS (308 aa)). Cysteine 142 is a catalytic residue.

The protein belongs to the class I-like SAM-binding methyltransferase superfamily. C5-methyltransferase family.

It carries out the reaction a 2'-deoxycytidine in DNA + S-adenosyl-L-methionine = a 5-methyl-2'-deoxycytidine in DNA + S-adenosyl-L-homocysteine + H(+). Functionally, a methylase that recognizes the double-stranded sequence 5'-CCNGG-3', methylates C-2 on both strands, and protects the DNA from cleavage by the SsoII endonuclease. The protein is Type II methyltransferase M.SsoII (ssoIIM) of Shigella sonnei.